The following is a 512-amino-acid chain: Maturase K (512 aa).

The protein belongs to the intron maturase 2 family. MatK subfamily.

The protein resides in the plastid. It is found in the chloroplast. Usually encoded in the trnK tRNA gene intron. Probably assists in splicing its own and other chloroplast group II introns. The protein is Maturase K of Platanus occidentalis (Sycamore).